Here is an 87-residue protein sequence, read N- to C-terminus: Small ribosomal subunit protein bS16 (87 aa).

Belongs to the bacterial ribosomal protein bS16 family.

The protein is Small ribosomal subunit protein bS16 of Variovorax paradoxus (strain S110).